A 634-amino-acid polypeptide reads, in one-letter code: Growth hormone receptor (634 aa).

The N-terminal stretch at 1-18 is a signal peptide; that stretch reads MDLWQLLLTLAVAGSSDA. Residues 19-260 lie on the Extracellular side of the membrane; sequence FSGSEATPAF…NPSACEEDFQ (242 aa). N-linked (GlcNAc...) asparagine glycosylation occurs at Asn-46. Cys-56 and Cys-66 are joined by a disulfide. Asn-73 is a glycosylation site (N-linked (GlcNAc...) asparagine). Cys-97 and Cys-108 are oxidised to a cystine. The N-linked (GlcNAc...) asparagine glycan is linked to Asn-111. Cysteines 122 and 136 form a disulfide. The Fibronectin type-III domain occupies 147-250; sequence PPVGLNWTLL…EVLLITFPQM (104 aa). 3 N-linked (GlcNAc...) asparagine glycosylation sites follow: Asn-152, Asn-157, and Asn-196. Positions 236-240 match the WSXWS motif motif; that stretch reads YGKFS. A helical transmembrane segment spans residues 261-284; that stretch reads FPWFLIIIFGILGLTVTLFLLIFS. Residues 285–634 are Cytoplasmic-facing; the sequence is KQQRIKMLIL…STDQLNKIMP (350 aa). The required for JAK2 binding stretch occupies residues 290-375; that stretch reads KMLILPPVPV…HEKSLSIFGA (86 aa). The short motif at 293–301 is the Box 1 motif element; that stretch reads ILPPVPVPK. The UbE motif signature appears at 336 to 345; it reads DSWVEFIELD. Ser-337 carries the post-translational modification Phosphoserine. A disordered region spans residues 451-471; it reads KPRPLPIGGTESTHQAVHTQL. Positions 460–471 are enriched in polar residues; sequence TESTHQAVHTQL. Residues Tyr-483 and Tyr-591 each carry the phosphotyrosine modification.

The protein belongs to the type I cytokine receptor family. Type 1 subfamily. On growth hormone (GH) binding, forms homodimers and binds JAK2 via a box 1-containing domain. In terms of processing, the soluble form (GHBP) is produced by phorbol ester-promoted proteolytic cleavage at the cell surface (shedding) by ADAM17/TACE. Shedding is inhibited by growth hormone (GH) binding to the receptor probably due to a conformational change in GHR rendering the receptor inaccessible to ADAM17. On GH binding, phosphorylated on tyrosine residues in the cytoplasmic domain by JAK2. Post-translationally, ubiquitinated by the ECS(SOCS2) complex following ligand-binding and phosphorylation by JAK2, leading to its degradation by the proteasome. Regulation by the ECS(SOCS2) complex acts as a negative feedback loop of growth hormone receptor signaling. Ubiquitination is not sufficient for GHR internalization.

It is found in the cell membrane. Its subcellular location is the secreted. Functionally, receptor for pituitary gland growth hormone (GH1) involved in regulating postnatal body growth. On ligand binding, couples to the JAK2/STAT5 pathway. Its function is as follows. The soluble form (GHBP) acts as a reservoir of growth hormone in plasma and may be a modulator/inhibitor of GH signaling. In Ovis aries (Sheep), this protein is Growth hormone receptor (GHR).